Here is a 209-residue protein sequence, read N- to C-terminus: D-aminoacyl-tRNA deacylase 1 (209 aa).

Mg(2+) is bound by residues V4, Q6, and C28. The Gly-cisPro motif, important for rejection of L-amino acids motif lies at 139-140 (GP). The interval 142–209 (TIELESPAPG…EGDVSSEREP (68 aa)) is disordered. 2 stretches are compositionally biased toward basic and acidic residues: residues 159–170 (QLSKLEKQQQRK) and 181–194 (SSKE…EDRS). A phosphoserine mark is found at S197, S204, and S205.

Belongs to the DTD family. Homodimer. Interacts with CDC45 and TOPBP1. Preferentially phosphorylated in cells arrested early in S phase. Phosphorylation in the C-terminus weakens the interaction with CDC45. Expressed in many adult and fetal tissues. Highest levels in testis, ovary, spleen and in adult and fetal brain.

It is found in the nucleus. Its subcellular location is the cytoplasm. The catalysed reaction is glycyl-tRNA(Ala) + H2O = tRNA(Ala) + glycine + H(+). The enzyme catalyses a D-aminoacyl-tRNA + H2O = a tRNA + a D-alpha-amino acid + H(+). Possible ATPase involved in DNA replication, may facilitate loading of CDC45 onto pre-replication complexes. In terms of biological role, an aminoacyl-tRNA editing enzyme that deacylates mischarged D-aminoacyl-tRNAs. Also deacylates mischarged glycyl-tRNA(Ala), protecting cells against glycine mischarging by AlaRS. Acts via tRNA-based rather than protein-based catalysis; rejects L-amino acids rather than detecting D-amino acids in the active site. By recycling D-aminoacyl-tRNA to D-amino acids and free tRNA molecules, this enzyme counteracts the toxicity associated with the formation of D-aminoacyl-tRNA entities in vivo and helps enforce protein L-homochirality. The protein is D-aminoacyl-tRNA deacylase 1 (DTD1) of Homo sapiens (Human).